The primary structure comprises 253 residues: Phosphate import ATP-binding protein PstB 3 (253 aa).

Residues L8–I248 form the ABC transporter domain. An ATP-binding site is contributed by G40–S47.

It belongs to the ABC transporter superfamily. Phosphate importer (TC 3.A.1.7) family. In terms of assembly, the complex is composed of two ATP-binding proteins (PstB), two transmembrane proteins (PstC and PstA) and a solute-binding protein (PstS).

The protein localises to the cell membrane. It carries out the reaction phosphate(out) + ATP + H2O = ADP + 2 phosphate(in) + H(+). Its function is as follows. Part of the ABC transporter complex PstSACB involved in phosphate import. Responsible for energy coupling to the transport system. This Streptococcus agalactiae serotype III (strain NEM316) protein is Phosphate import ATP-binding protein PstB 3.